Consider the following 201-residue polypeptide: MELVLKDAQSALTVSETTFGRDFNEALVHQVVVAYAAGARQGTRAQKTRAEVTGSGKKPWRQKGTGRARSGSIKSPIWRSGGVTFAARPQDHSQKVNKKMYRGALKSILSELVRQDRLIVVETFSVEAPKTKLLAQKLKDMALEDVLIITGELDENLFLAARNLHKVDVRDATGIDPVSLIAFDKVVMTADAVKQVEEMLA.

The tract at residues 44 to 71 (RAQKTRAEVTGSGKKPWRQKGTGRARSG) is disordered.

This sequence belongs to the universal ribosomal protein uL4 family. As to quaternary structure, part of the 50S ribosomal subunit.

Functionally, one of the primary rRNA binding proteins, this protein initially binds near the 5'-end of the 23S rRNA. It is important during the early stages of 50S assembly. It makes multiple contacts with different domains of the 23S rRNA in the assembled 50S subunit and ribosome. Its function is as follows. Forms part of the polypeptide exit tunnel. This is Large ribosomal subunit protein uL4 from Enterobacter sp. (strain 638).